Here is a 147-residue protein sequence, read N- to C-terminus: Deoxyuridine 5'-triphosphate nucleotidohydrolase (147 aa).

Residues 67 to 69 (RSG), Asn-80, and 84 to 86 (LID) each bind substrate.

The protein belongs to the dUTPase family. Mg(2+) is required as a cofactor.

It catalyses the reaction dUTP + H2O = dUMP + diphosphate + H(+). It participates in pyrimidine metabolism; dUMP biosynthesis; dUMP from dCTP (dUTP route): step 2/2. Functionally, this enzyme is involved in nucleotide metabolism: it produces dUMP, the immediate precursor of thymidine nucleotides and it decreases the intracellular concentration of dUTP so that uracil cannot be incorporated into DNA. The protein is Deoxyuridine 5'-triphosphate nucleotidohydrolase of Dictyoglomus turgidum (strain DSM 6724 / Z-1310).